The chain runs to 1288 residues: Disease resistance protein RRS1 (1288 aa).

In terms of domain architecture, TIR spans 5 to 146 (EKDEEFVCIS…EIVRDVYETH (142 aa)). An important for interaction with RPS4 region spans residues 25–26 (SH). The region spanning 170–421 (IGIRCVGIWG…LLEGCGFFPH (252 aa)) is the NB-ARC domain. 179 to 186 (GMPGIGKT) lines the ATP pocket. 12 LRR repeats span residues 498-522 (SEEI…AFKN), 535-553 (NPEV…HSLP), 554-575 (NELR…NFDP), 577-598 (HLVE…TKNL), 621-646 (AENL…RLLR), 665-688 (PPNI…TVKP), 697-720 (LTEI…NSSC), 740-764 (LPNM…SIQG), 766-791 (PRFL…SLEI), 792-807 (LNAH…NMAN), 808-829 (LEFL…QGFP), and 830-852 (RNLK…PLSL). The Nuclear localization signal signature appears at 986–1003 (RKFHCWAPWQVVPKVRKD). The segment at residues 1202-1270 (IPAIDEGDLW…YLSEHNHPRP (69 aa)) is a DNA-binding region (WRKY). The interval 1267-1288 (HPRPTKRKALADSTRSTSSSIC) is disordered. Over residues 1279–1288 (STRSTSSSIC) the composition is skewed to polar residues.

The protein belongs to the disease resistance TIR-NB-LRR family. Interacts with PopP2, a R.solanacearum type III effector. Interacts with RPS4.

Its subcellular location is the nucleus. It localises to the cytoplasm. Its function is as follows. Transcription factor. Interacts specifically with the W box (5'-(T)TGAC[CT]-3'), a frequently occurring elicitor-responsive cis-acting element. Also acts as a disease resistance protein involved in resistance to fungal and bacterial pathogens, including R.solanacearum, P.syringae pv. tomato and C.higginsianum. Heterodimerization with RPS4 is required to form a functional complex to recognize AvrRps4 and PopP2. Contributes to temperature-conditioned RPS4 auto-immunity. This is Disease resistance protein RRS1 from Arabidopsis thaliana (Mouse-ear cress).